We begin with the raw amino-acid sequence, 397 residues long: CCA-adding enzyme (397 aa).

Positions 27 and 30 each coordinate ATP. Positions 27 and 30 each coordinate CTP. Aspartate 40 and aspartate 42 together coordinate Mg(2+). ATP-binding residues include arginine 111, aspartate 154, arginine 157, arginine 160, and arginine 163. Arginine 111, aspartate 154, arginine 157, arginine 160, and arginine 163 together coordinate CTP.

Belongs to the tRNA nucleotidyltransferase/poly(A) polymerase family. Bacterial CCA-adding enzyme type 3 subfamily. Homodimer. It depends on Mg(2+) as a cofactor.

It carries out the reaction a tRNA precursor + 2 CTP + ATP = a tRNA with a 3' CCA end + 3 diphosphate. The enzyme catalyses a tRNA with a 3' CCA end + 2 CTP + ATP = a tRNA with a 3' CCACCA end + 3 diphosphate. Functionally, catalyzes the addition and repair of the essential 3'-terminal CCA sequence in tRNAs without using a nucleic acid template. Adds these three nucleotides in the order of C, C, and A to the tRNA nucleotide-73, using CTP and ATP as substrates and producing inorganic pyrophosphate. tRNA 3'-terminal CCA addition is required both for tRNA processing and repair. Also involved in tRNA surveillance by mediating tandem CCA addition to generate a CCACCA at the 3' terminus of unstable tRNAs. While stable tRNAs receive only 3'-terminal CCA, unstable tRNAs are marked with CCACCA and rapidly degraded. This chain is CCA-adding enzyme, found in Bacillus licheniformis (strain ATCC 14580 / DSM 13 / JCM 2505 / CCUG 7422 / NBRC 12200 / NCIMB 9375 / NCTC 10341 / NRRL NRS-1264 / Gibson 46).